The following is a 155-amino-acid chain: SsrA-binding protein (155 aa).

Belongs to the SmpB family.

It is found in the cytoplasm. Required for rescue of stalled ribosomes mediated by trans-translation. Binds to transfer-messenger RNA (tmRNA), required for stable association of tmRNA with ribosomes. tmRNA and SmpB together mimic tRNA shape, replacing the anticodon stem-loop with SmpB. tmRNA is encoded by the ssrA gene; the 2 termini fold to resemble tRNA(Ala) and it encodes a 'tag peptide', a short internal open reading frame. During trans-translation Ala-aminoacylated tmRNA acts like a tRNA, entering the A-site of stalled ribosomes, displacing the stalled mRNA. The ribosome then switches to translate the ORF on the tmRNA; the nascent peptide is terminated with the 'tag peptide' encoded by the tmRNA and targeted for degradation. The ribosome is freed to recommence translation, which seems to be the essential function of trans-translation. This is SsrA-binding protein from Streptococcus suis (strain 98HAH33).